The following is a 687-amino-acid chain: Glycine--tRNA ligase beta subunit (687 aa).

The protein belongs to the class-II aminoacyl-tRNA synthetase family. As to quaternary structure, tetramer of two alpha and two beta subunits.

Its subcellular location is the cytoplasm. The enzyme catalyses tRNA(Gly) + glycine + ATP = glycyl-tRNA(Gly) + AMP + diphosphate. This chain is Glycine--tRNA ligase beta subunit, found in Trichlorobacter lovleyi (strain ATCC BAA-1151 / DSM 17278 / SZ) (Geobacter lovleyi).